The chain runs to 332 residues: Malate dehydrogenase (332 aa).

NAD(+) is bound by residues 16 to 17 (QI), aspartate 43, and glycine 90. Arginine 99 provides a ligand contact to oxaloacetate. NAD(+) contacts are provided by glutamine 113 and asparagine 132. Asparagine 132, arginine 163, histidine 188, and serine 243 together coordinate oxaloacetate. Histidine 188 (proton acceptor) is an active-site residue.

The protein belongs to the LDH/MDH superfamily. MDH type 2 family. In terms of assembly, homodimer.

The protein localises to the cytoplasm. The catalysed reaction is (S)-malate + NAD(+) = oxaloacetate + NADH + H(+). Its function is as follows. Catalyzes the reduction of the carbonyl group of oxalacetic acid. No activity with pulegone. The polypeptide is Malate dehydrogenase (MD1) (Nicotiana tabacum (Common tobacco)).